The sequence spans 244 residues: 23S rRNA (guanosine-2'-O-)-methyltransferase RlmB (244 aa).

S-adenosyl-L-methionine is bound by residues Gly-196, Ile-216, and Leu-225.

This sequence belongs to the class IV-like SAM-binding methyltransferase superfamily. RNA methyltransferase TrmH family. RlmB subfamily. Homodimer.

The protein resides in the cytoplasm. It catalyses the reaction guanosine(2251) in 23S rRNA + S-adenosyl-L-methionine = 2'-O-methylguanosine(2251) in 23S rRNA + S-adenosyl-L-homocysteine + H(+). Specifically methylates the ribose of guanosine 2251 in 23S rRNA. In Pectobacterium atrosepticum (strain SCRI 1043 / ATCC BAA-672) (Erwinia carotovora subsp. atroseptica), this protein is 23S rRNA (guanosine-2'-O-)-methyltransferase RlmB.